We begin with the raw amino-acid sequence, 155 residues long: uncharacterized protein (155 aa).

Positions 1 to 24 (MQQLSKRRLSALFVTAFLPVTAFA) are cleaved as a signal peptide.

This is an uncharacterized protein from Chromohalobacter salexigens (strain ATCC BAA-138 / DSM 3043 / CIP 106854 / NCIMB 13768 / 1H11).